The primary structure comprises 312 residues: Acetaldehyde dehydrogenase (312 aa).

Residue 11–14 (SGNI) participates in NAD(+) binding. Cysteine 129 functions as the Acyl-thioester intermediate in the catalytic mechanism. NAD(+) is bound by residues 160–168 (SAGPGTRAN) and asparagine 287.

This sequence belongs to the acetaldehyde dehydrogenase family.

It catalyses the reaction acetaldehyde + NAD(+) + CoA = acetyl-CoA + NADH + H(+). The chain is Acetaldehyde dehydrogenase (xylQ) from Sphingobium yanoikuyae (Sphingomonas yanoikuyae).